The following is a 337-amino-acid chain: Adenylosuccinate synthetase (337 aa).

GTP-binding positions include 12–18 and 42–44; these read GDEGKGK and GHT. Aspartate 13 functions as the Proton acceptor in the catalytic mechanism. The Mg(2+) site is built by aspartate 13 and glycine 42. IMP contacts are provided by residues 13-16, 40-43, threonine 127, arginine 141, glutamine 179, threonine 194, and arginine 256; these read DEGK and NAGH. Residue histidine 43 is the Proton donor of the active site. Substrate is bound at residue 252-258; the sequence is TVTGRRR. GTP-binding positions include arginine 258, 284–286, and 324–326; these read CLD and STG.

This sequence belongs to the adenylosuccinate synthetase family. As to quaternary structure, homodimer. It depends on Mg(2+) as a cofactor.

The protein resides in the cytoplasm. The enzyme catalyses IMP + L-aspartate + GTP = N(6)-(1,2-dicarboxyethyl)-AMP + GDP + phosphate + 2 H(+). It participates in purine metabolism; AMP biosynthesis via de novo pathway; AMP from IMP: step 1/2. Its function is as follows. Plays an important role in the de novo pathway of purine nucleotide biosynthesis. Catalyzes the first committed step in the biosynthesis of AMP from IMP. The chain is Adenylosuccinate synthetase from Methanococcus maripaludis (strain C5 / ATCC BAA-1333).